Here is a 354-residue protein sequence, read N- to C-terminus: Uroporphyrinogen decarboxylase (354 aa).

Substrate contacts are provided by residues 27–31 (RQAGR), aspartate 77, tyrosine 154, serine 209, and histidine 327.

Belongs to the uroporphyrinogen decarboxylase family. Homodimer.

The protein resides in the cytoplasm. It carries out the reaction uroporphyrinogen III + 4 H(+) = coproporphyrinogen III + 4 CO2. It functions in the pathway porphyrin-containing compound metabolism; protoporphyrin-IX biosynthesis; coproporphyrinogen-III from 5-aminolevulinate: step 4/4. Catalyzes the decarboxylation of four acetate groups of uroporphyrinogen-III to yield coproporphyrinogen-III. The sequence is that of Uroporphyrinogen decarboxylase from Shewanella sp. (strain ANA-3).